The following is a 421-amino-acid chain: Testin (421 aa).

Residues 92 to 199 (MILTNPVAAK…GDVKLPCEMD (108 aa)) enclose the PET domain. Positions 133 to 164 (EKQPVAGSEGAQYRKKQLAKQLPAHDQDPSKC) are disordered. The span at 155-164 (PAHDQDPSKC) shows a compositional bias: basic and acidic residues. 3 LIM zinc-binding domains span residues 234-297 (YSCY…CDSE), 299-359 (PRCA…NHAV), and 362-421 (QGCH…KMMS).

It belongs to the prickle / espinas / testin family. In terms of assembly, interacts via LIM domain 1 with ZYX. Interacts (via LIM domain 3) with ENAH and VASP. Interacts with ALKBH4, talin, actin, alpha-actinin, GRIP1 and PXN. Interacts (via LIM domain 2) with ACTL7A (via N-terminus). Heterodimer with ACTL7A; the heterodimer interacts with ENAH to form a heterotrimer.

It localises to the cytoplasm. Its subcellular location is the cell junction. The protein localises to the focal adhesion. Scaffold protein that may play a role in cell adhesion, cell spreading and in the reorganization of the actin cytoskeleton. Plays a role in the regulation of cell proliferation. May act as a tumor suppressor. This chain is Testin (TES), found in Microcebus murinus (Gray mouse lemur).